The sequence spans 295 residues: Aspartate carbamoyltransferase catalytic subunit (295 aa).

Residues arginine 49 and threonine 50 each contribute to the carbamoyl phosphate site. L-aspartate is bound at residue lysine 77. Residues arginine 99, histidine 127, and glutamine 130 each contribute to the carbamoyl phosphate site. Residues arginine 161 and arginine 212 each contribute to the L-aspartate site. The carbamoyl phosphate site is built by glycine 251 and proline 252.

The protein belongs to the aspartate/ornithine carbamoyltransferase superfamily. ATCase family. In terms of assembly, heterododecamer (2C3:3R2) of six catalytic PyrB chains organized as two trimers (C3), and six regulatory PyrI chains organized as three dimers (R2).

It catalyses the reaction carbamoyl phosphate + L-aspartate = N-carbamoyl-L-aspartate + phosphate + H(+). It participates in pyrimidine metabolism; UMP biosynthesis via de novo pathway; (S)-dihydroorotate from bicarbonate: step 2/3. Catalyzes the condensation of carbamoyl phosphate and aspartate to form carbamoyl aspartate and inorganic phosphate, the committed step in the de novo pyrimidine nucleotide biosynthesis pathway. This is Aspartate carbamoyltransferase catalytic subunit from Aliarcobacter butzleri (strain RM4018) (Arcobacter butzleri).